The primary structure comprises 199 residues: Recombination protein RecR (199 aa).

Residues 58 to 73 (CSICCNITDTDPCSMC) form a C4-type zinc finger. Residues 81 to 176 (SVICVVEDPR…KVTRIAHGLP (96 aa)) form the Toprim domain.

The protein belongs to the RecR family.

Its function is as follows. May play a role in DNA repair. It seems to be involved in an RecBC-independent recombinational process of DNA repair. It may act with RecF and RecO. This chain is Recombination protein RecR, found in Clostridioides difficile (strain 630) (Peptoclostridium difficile).